The sequence spans 662 residues: UvrABC system protein B (662 aa).

In terms of domain architecture, Helicase ATP-binding spans 31–188 (DNIEGGEKAQ…NDLVDIQFER (158 aa)). An ATP-binding site is contributed by 44-51 (GATGTGKT). A Beta-hairpin motif is present at residues 97–120 (YYDYYQPEAYVPSSDTYIEKDSSV). The Helicase C-terminal domain occupies 435–601 (QIDDLLGEIN…TIKKEIRDLI (167 aa)). Residues 626–661 (KELVKKLEKQMQEAVEVLDFELAAQIRDMMLEVKAL) form the UVR domain.

It belongs to the UvrB family. Forms a heterotetramer with UvrA during the search for lesions. Interacts with UvrC in an incision complex.

It localises to the cytoplasm. Its function is as follows. The UvrABC repair system catalyzes the recognition and processing of DNA lesions. A damage recognition complex composed of 2 UvrA and 2 UvrB subunits scans DNA for abnormalities. Upon binding of the UvrA(2)B(2) complex to a putative damaged site, the DNA wraps around one UvrB monomer. DNA wrap is dependent on ATP binding by UvrB and probably causes local melting of the DNA helix, facilitating insertion of UvrB beta-hairpin between the DNA strands. Then UvrB probes one DNA strand for the presence of a lesion. If a lesion is found the UvrA subunits dissociate and the UvrB-DNA preincision complex is formed. This complex is subsequently bound by UvrC and the second UvrB is released. If no lesion is found, the DNA wraps around the other UvrB subunit that will check the other stand for damage. The sequence is that of UvrABC system protein B from Streptococcus pneumoniae (strain P1031).